A 490-amino-acid chain; its full sequence is Glycine--tRNA ligase (490 aa).

Residues Arg-99 and Glu-163 each coordinate substrate. Residues 195–197 (RNE), 205–210 (FRTREF), 282–283 (EL), and 326–329 (GLTR) each bind ATP. Substrate is bound at residue 210–214 (FEQME). Position 322–326 (322–326 (EPAAG)) interacts with substrate. The tract at residues 470-490 (PVEMGGEPWPESGVQEAGGLY) is disordered.

This sequence belongs to the class-II aminoacyl-tRNA synthetase family. In terms of assembly, homodimer.

It is found in the cytoplasm. It catalyses the reaction tRNA(Gly) + glycine + ATP = glycyl-tRNA(Gly) + AMP + diphosphate. Its function is as follows. Catalyzes the attachment of glycine to tRNA(Gly). The chain is Glycine--tRNA ligase from Bifidobacterium longum (strain NCC 2705).